The following is a 125-amino-acid chain: Small ribosomal subunit protein eS26 (125 aa).

It belongs to the eukaryotic ribosomal protein eS26 family.

The protein is Small ribosomal subunit protein eS26 (RPS26) of Sterkiella nova (Ciliate).